The sequence spans 396 residues: Digeranylgeranylglycerophospholipid reductase (396 aa).

Positions 14, 33, 44, 45, 47, 100, 124, 162, 283, 295, and 296 each coordinate FAD. The a 2,3-bis-O-(geranylgeranyl)-sn-glycerol 1-phospholipid site is built by K338 and V374.

Belongs to the geranylgeranyl reductase family. DGGGPL reductase subfamily. FAD serves as cofactor.

It carries out the reaction 2,3-bis-O-(phytanyl)-sn-glycerol 1-phosphate + 8 NADP(+) = 2,3-bis-O-(geranylgeranyl)-sn-glycerol 1-phosphate + 8 NADPH + 8 H(+). It catalyses the reaction 2,3-bis-O-(phytanyl)-sn-glycerol 1-phosphate + 8 NAD(+) = 2,3-bis-O-(geranylgeranyl)-sn-glycerol 1-phosphate + 8 NADH + 8 H(+). The enzyme catalyses a 2,3-bis-O-phytanyl-sn-glycerol 1-phospholipid + 8 A = a 2,3-bis-O-(geranylgeranyl)-sn-glycerol 1-phospholipid + 8 AH2. The catalysed reaction is CDP-2,3-bis-O-(geranylgeranyl)-sn-glycerol + 8 AH2 = CDP-2,3-bis-O-(phytanyl)-sn-glycerol + 8 A. It carries out the reaction archaetidylserine + 8 AH2 = 2,3-bis-O-phytanyl-sn-glycero-3-phospho-L-serine + 8 A. Its pathway is membrane lipid metabolism; glycerophospholipid metabolism. Is involved in the reduction of 2,3-digeranylgeranylglycerophospholipids (unsaturated archaeols) into 2,3-diphytanylglycerophospholipids (saturated archaeols) in the biosynthesis of archaeal membrane lipids. Catalyzes the formation of archaetidic acid (2,3-di-O-phytanyl-sn-glyceryl phosphate) from 2,3-di-O-geranylgeranylglyceryl phosphate (DGGGP) via the hydrogenation of each double bond of the isoprenoid chains. Is also probably able to reduce double bonds of geranyl groups in CDP-2,3-bis-O-(geranylgeranyl)-sn-glycerol and archaetidylserine, thus acting at various stages in the biosynthesis of archaeal membrane lipids. The protein is Digeranylgeranylglycerophospholipid reductase of Thermoplasma volcanium (strain ATCC 51530 / DSM 4299 / JCM 9571 / NBRC 15438 / GSS1).